We begin with the raw amino-acid sequence, 1143 residues long: MDATLDRFFPLFESESNEDFWRIEEIRRYHESLMVELDRIYRIAEAARKKGLDPELSVEIPIAKNMAERVEKLMNLQGLAKRIMELEEGGLSRELICFKVADEIVEGKFGEMPKEEAIDKAVRTAVAIMTEGVVAAPIEGIARVRIDRENFLRVYYAGPIRSAGGTAQVISVLVADYVRRKAEIGRYVPTEEEILRYCEEIPLYKKVANLQYLPSDEEIRLIVSNCPICIDGEPTESAEVSGYRNLPRVETNRVRGGMALVIAEGIALKAPKLKKMVDEVGIEGWEWLDALIKGGGDSGSEEEKAVIKPKDKYLSDIVAGRPVLSHPSRKGGFRLRYGRARNSGFATVGVNPATMYLLEFVAVGTQLKVERPGKAGGVVPVSTIEGPTVRLKNGDVVKINTLSEAKALKGEVAAILDLGEILINYGDFLENNHPLIPASYTYEWWIQEAEKAGLRGDYRKISEEEALKLCDEFHVPLHPDYTYLWHDISVEDYRYLRNFVSDNGKIEGKHGKSVLLLPYDSRVKEILEALLLEHKVRESFIVIETWRAFIRCLGLDEKLSKVSEVSGKDVLEIVNGISGIKVRPKALSRIGARMGRPEKAKERKMSPPPHILFPVGMAGGNTRDIKNAINYTKSYNAKKGEIEVEIAIRKCPQCGKETFWLKCDVCGELTEQLYYCPSCRMKNTSSVCESCGRECEGYMKRKVDLRELYEEAIANLGEYDSFDTIKGVKGMTSKTKIPERLEKGILRVKHGVFVFKDGTARFDATDLPITHFKPAEIGVSVEKLRELGYERDYKGAELKNENQIVELKPQDVILPKSGAEYLLRVANFIDDLLVKFYKMEPFYNAKSVEDLIGHLVIGLAPHTSAGVLGRIIGFSDVLAGYAHPYFHAAKRRNCDGDEDCFMLLLDGLLNFSRKFLPDKRGGQMDAPLVLTAIVDPREVDKEVHNMDIVERYPLEFYEATMRFASPKEMEDYVEKVKDRLKDESRFCGLFFTHDTENIAAGVKESAYKSLKTMQDKVYRQMELARMIVAVDEHDVAERVINVHFLPDIIGNLRAFSRQEFRCTRCNTKYRRIPLVGKCLKCGNKLTLTVHSSSIMKYLELSKFLCENFNVSSYTKQRLMLLEQEIKSMFENGTEKQVSISDFV.

Belongs to the archaeal DNA polymerase II family. As to quaternary structure, heterodimer of a large subunit and a small subunit.

The catalysed reaction is DNA(n) + a 2'-deoxyribonucleoside 5'-triphosphate = DNA(n+1) + diphosphate. It catalyses the reaction Exonucleolytic cleavage in the 3'- to 5'-direction to yield nucleoside 5'-phosphates.. Its function is as follows. Possesses two activities: a DNA synthesis (polymerase) and an exonucleolytic activity that degrades single-stranded DNA in the 3'- to 5'-direction. Has a template-primer preference which is characteristic of a replicative DNA polymerase. The chain is DNA polymerase II large subunit (polC) from Archaeoglobus fulgidus (strain ATCC 49558 / DSM 4304 / JCM 9628 / NBRC 100126 / VC-16).